The sequence spans 339 residues: DNA-directed RNA polymerase subunit alpha (339 aa).

Residues 1–233 (MVREEVAGST…DLFLPFLHAE (233 aa)) are alpha N-terminal domain (alpha-NTD). The tract at residues 264–339 (KKGIPLNCIF…IDLLKNKLSF (76 aa)) is alpha C-terminal domain (alpha-CTD).

It belongs to the RNA polymerase alpha chain family. In terms of assembly, in plastids the minimal PEP RNA polymerase catalytic core is composed of four subunits: alpha, beta, beta', and beta''. When a (nuclear-encoded) sigma factor is associated with the core the holoenzyme is formed, which can initiate transcription.

The protein localises to the plastid. It is found in the chloroplast. It catalyses the reaction RNA(n) + a ribonucleoside 5'-triphosphate = RNA(n+1) + diphosphate. Functionally, DNA-dependent RNA polymerase catalyzes the transcription of DNA into RNA using the four ribonucleoside triphosphates as substrates. The sequence is that of DNA-directed RNA polymerase subunit alpha from Bromus inermis (Smooth brome grass).